Reading from the N-terminus, the 431-residue chain is Nuclear bridge Ish domain protein les1 (431 aa).

Positions Met-1–Ser-21 are cleaved as a signal peptide.

The protein localises to the nucleus inner membrane. Its function is as follows. Inner nuclear envelope protein involved in nuclear fission, which is achieved via local disassembly of nuclear pores within the narrow bridge that links segregating daughter nuclei. Les1 restricts the process of local nuclear envelope breakdown to the bridge midzone to prevent the leakage of material from daughter nuclei during mitosis. This Schizosaccharomyces pombe (strain 972 / ATCC 24843) (Fission yeast) protein is Nuclear bridge Ish domain protein les1.